A 568-amino-acid polypeptide reads, in one-letter code: Phosphoprotein (568 aa).

Disordered regions lie at residues 1-22 (MDQD…PGGR) and 40-320 (PTDI…GIGE). A compositionally biased stretch (basic and acidic residues) spans 7 to 20 (ILKEDSEVERKAPG). Residues 33–41 (DAVLSSEPT) form an N0 binding region. The segment covering 50–60 (LHNTINTSQGP) has biased composition (polar residues). Ser68 carries the phosphoserine; by host modification. The segment covering 83-101 (RSGEESRVSGRTSKPEAEA) has biased composition (basic and acidic residues). A Phosphoserine; by host modification is found at Ser125. The span at 150-168 (GIEDENREMAAHPDKRGED) shows a compositional bias: basic and acidic residues. Residues 191 to 206 (ASNNGRSMEPGSSHSA) are compositionally biased toward polar residues. Phosphoserine; by host is present on residues Ser192, Ser249, and Ser257. The multimerization stretch occupies residues 344 to 411 (FESSRDASYV…SFRDIYKRFS (68 aa)). Residues 364–429 (YAEMTFNVCG…LLMSNLSTLH (66 aa)) adopt a coiled-coil conformation. The tract at residues 412–445 (EYQKEQNSLLMSNLSTLHIITDRGGKTDNTDSLT) is l protein binding. Ser447 and Ser449 each carry phosphoserine; by host. An interaction with the nucleocapsid (N-RNA) region spans residues 479–568 (DLIREDEFRD…VEEDIESLTN (90 aa)).

This sequence belongs to the respirovirus P protein family. In terms of assembly, homotetramer. Interacts (via multimerization domain) with polymerase L; this interaction forms the polymerase complex. Interacts (via N-terminus) with N0; this interaction allows P to chaperon N0 before encapsidation and form the N-P complex. Interacts (via C-terminus) with N-RNA template; this interaction positions the polymerase on the template. Phosphorylated by PKC/PRKCZ, and other unknown kinases. Phosphorylation is necessary for viral transcription and replication. The N-terminus contains the majority of phosphorylated sites. Ser-249 is the major site of phosphorylation, but is not necessary for most functions.

The protein localises to the host cytoplasm. Functionally, essential cofactor of the RNA polymerase L that plays a central role in the transcription and replication by forming the polymerase complex with RNA polymerase L and recruiting L to the genomic N-RNA template for RNA synthesis. Also plays a central role in the encapsidation of nascent RNA chains by forming the encapsidation complex with the nucleocapsid protein N (N-P complex). Acts as a chaperone for newly synthesized free N protein, so-called N0, allowing encapsidation of nascent RNA chains during replication. The nucleoprotein protein N prevents excessive phosphorylation of P, which leads to down-regulation of viral transcription/ replication. Participates, together with N, in the formation of viral factories (viroplasms), which are large inclusions in the host cytoplasm where replication takes place. Recruits host PI4KB and remodel the host endoplasmic reticulum membrane to form viral replication factories. The sequence is that of Phosphoprotein (P/V/C) from Sendai virus (strain 6/94) (SeV).